Here is an 83-residue protein sequence, read N- to C-terminus: Exodeoxyribonuclease 7 small subunit (83 aa).

Belongs to the XseB family. As to quaternary structure, heterooligomer composed of large and small subunits.

The protein resides in the cytoplasm. It catalyses the reaction Exonucleolytic cleavage in either 5'- to 3'- or 3'- to 5'-direction to yield nucleoside 5'-phosphates.. Its function is as follows. Bidirectionally degrades single-stranded DNA into large acid-insoluble oligonucleotides, which are then degraded further into small acid-soluble oligonucleotides. The sequence is that of Exodeoxyribonuclease 7 small subunit from Bradyrhizobium diazoefficiens (strain JCM 10833 / BCRC 13528 / IAM 13628 / NBRC 14792 / USDA 110).